Consider the following 100-residue polypeptide: Large ribosomal subunit protein uL23 (100 aa).

Belongs to the universal ribosomal protein uL23 family. As to quaternary structure, part of the 50S ribosomal subunit. Contacts protein L29, and trigger factor when it is bound to the ribosome.

One of the early assembly proteins it binds 23S rRNA. One of the proteins that surrounds the polypeptide exit tunnel on the outside of the ribosome. Forms the main docking site for trigger factor binding to the ribosome. The protein is Large ribosomal subunit protein uL23 of Prochlorococcus marinus subsp. pastoris (strain CCMP1986 / NIES-2087 / MED4).